Reading from the N-terminus, the 121-residue chain is Putative membrane protein insertion efficiency factor (121 aa).

Positions 97-121 are disordered; sequence VPARRDRHAGGRRCCPANVDEQRST.

It belongs to the UPF0161 family.

It is found in the cell membrane. Functionally, could be involved in insertion of integral membrane proteins into the membrane. In Rhodococcus jostii (strain RHA1), this protein is Putative membrane protein insertion efficiency factor.